The sequence spans 397 residues: Succinate--CoA ligase [ADP-forming] subunit beta (397 aa).

An ATP-grasp domain is found at 9 to 254 (KALLKGYGAP…ETEEDAKEIE (246 aa)). Residues Lys46, 53–55 (GRG), Glu109, Ala112, and Glu117 contribute to the ATP site. Residues Asn209 and Asp223 each contribute to the Mg(2+) site. Substrate-binding positions include Asn274 and 331 to 333 (GIM).

It belongs to the succinate/malate CoA ligase beta subunit family. Heterotetramer of two alpha and two beta subunits. The cofactor is Mg(2+).

It catalyses the reaction succinate + ATP + CoA = succinyl-CoA + ADP + phosphate. The enzyme catalyses GTP + succinate + CoA = succinyl-CoA + GDP + phosphate. Its pathway is carbohydrate metabolism; tricarboxylic acid cycle; succinate from succinyl-CoA (ligase route): step 1/1. Succinyl-CoA synthetase functions in the citric acid cycle (TCA), coupling the hydrolysis of succinyl-CoA to the synthesis of either ATP or GTP and thus represents the only step of substrate-level phosphorylation in the TCA. The beta subunit provides nucleotide specificity of the enzyme and binds the substrate succinate, while the binding sites for coenzyme A and phosphate are found in the alpha subunit. This Rhizobium etli (strain ATCC 51251 / DSM 11541 / JCM 21823 / NBRC 15573 / CFN 42) protein is Succinate--CoA ligase [ADP-forming] subunit beta.